Here is a 512-residue protein sequence, read N- to C-terminus: Retinaldehyde dehydrogenase 3 (512 aa).

Residues 1–22 form a disordered region; the sequence is MATANGAVENGQPDRKPPALPR. Ala2 carries the post-translational modification N-acetylalanine. NAD(+) is bound by residues Lys204, Glu207, and 257–262; that span reads GSTEVG. The Proton acceptor role is filled by Glu280. Cys314 acts as the Nucleophile in catalysis. Positions 361 and 411 each coordinate NAD(+).

Belongs to the aldehyde dehydrogenase family. As to quaternary structure, homotetramer. Expressed at low levels in many tissues and at higher levels in salivary gland, stomach, and kidney.

Its subcellular location is the cytoplasm. It catalyses the reaction all-trans-retinal + NAD(+) + H2O = all-trans-retinoate + NADH + 2 H(+). The enzyme catalyses retinal + NAD(+) + H2O = retinoate + NADH + 2 H(+). The catalysed reaction is all-trans-13,14-dihydroretinal + NAD(+) + H2O = all-trans-13,14-dihydroretinoate + NADH + 2 H(+). It participates in cofactor metabolism; retinol metabolism. Functionally, catalyzes the NAD-dependent oxidation of aldehyde substrates, such as all-trans-retinal and all-trans-13,14-dihydroretinal, to their corresponding carboxylic acids, all-trans-retinoate and all-trans-13,14-dihydroretinoate, respectively. High specificity for all-trans-retinal as substrate, can also accept acetaldehyde as substrate in vitro but with lower affinity. Required for the biosynthesis of normal levels of retinoate in the embryonic ocular and nasal regions; a critical lipid in the embryonic development of the eye and the nasal region. This Homo sapiens (Human) protein is Retinaldehyde dehydrogenase 3 (ALDH1A3).